The following is a 409-amino-acid chain: Beta-glucanase (409 aa).

Positions 1–31 (MRKNRGFSFSSKAVMMCCLAFLLIPASFAFA) are cleaved as a signal peptide. Glu95 serves as the catalytic Proton donor. Asp156 acts as the Nucleophile in catalysis.

Belongs to the glycosyl hydrolase 8 (cellulase D) family.

The catalysed reaction is Hydrolysis of (1-&gt;4)-beta-D-glucosidic linkages in beta-D-glucans containing (1-&gt;3)- and (1-&gt;4)-bonds.. This Niallia circulans (Bacillus circulans) protein is Beta-glucanase (bgc).